A 902-amino-acid chain; its full sequence is Androgen receptor (902 aa).

A modulating region spans residues 1–540 (MEVQLGLGRV…PIDYYFPPQK (540 aa)). Positions 1 to 569 (MEVQLGLGRV…GSCKVFFKRA (569 aa)) are interaction with ZNF318. Disordered regions lie at residues 35–146 (QNPG…LSLL) and 194–224 (QQEVISEGSSSVRAREATGAPSSSKDSYLGG). Position 61 is a phosphoserine; by CDK9 (S61). S75 carries the post-translational modification Phosphoserine. Over residues 94-103 (QPSQQQSASE) the composition is skewed to low complexity. 2 stretches are compositionally biased toward polar residues: residues 196-205 (EVISEGSSSV) and 213-224 (APSSSKDSYLGG). Residue Y221 is modified to Phosphotyrosine; by CSK. S254 carries the post-translational modification Phosphoserine. Position 265 is a phosphotyrosine; by CSK and TNK2 (Y265). S290 is subject to Phosphoserine. Residues Y305, Y344, Y355, and Y360 each carry the phosphotyrosine; by CSK modification. Y361 bears the Phosphotyrosine; by CSK and TNK2 mark. A Glycyl lysine isopeptide (Lys-Gly) (interchain with G-Cter in SUMO) cross-link involves residue K384. Y391 bears the Phosphotyrosine; by CSK mark. The interval 439–465 (EGQLYGPGGGGGSSSPSDAGPVAPYGY) is disordered. K503 participates in a covalent cross-link: Glycyl lysine isopeptide (Lys-Gly) (interchain with G-Cter in SUMO). Phosphotyrosine; by CSK is present on residues Y517 and Y534. The interaction with LPXN stretch occupies residues 534-901 (YYFPPQKTCL…GKVKPIYFHT (368 aa)). The nuclear receptor DNA-binding region spans 541 to 614 (TCLICGDEAS…AGMTLGARKL (74 aa)). 2 NR C4-type zinc fingers span residues 542-562 (CLICGDEASGCHYGALTCGSC) and 578-602 (CASRNDCTIDKFRRKNCPSCRLRKC). Positions 554 to 644 (YGALTCGSCK…TEDPSQKMTV (91 aa)) are interaction with HIPK3. Residues 574–901 (QKYLCASRND…GKVKPIYFHT (328 aa)) are interaction with CCAR1. Positions 607–901 (MTLGARKLKK…GKVKPIYFHT (295 aa)) are interaction with KAT7. S633 carries the phosphoserine modification. In terms of domain architecture, NR LBD spans 651 to 882 (ECQPIFLNVL…DFPEMMAEII (232 aa)). 17beta-hydroxy-5alpha-androstan-3-one contacts are provided by N688 and R735. Glycyl lysine isopeptide (Lys-Gly) (interchain with G-Cter in ubiquitin) cross-links involve residues K828 and K830. Residue T860 coordinates 17beta-hydroxy-5alpha-androstan-3-one. Phosphotyrosine; by CSK is present on Y898.

The protein belongs to the nuclear hormone receptor family. NR3 subfamily. In terms of assembly, binds DNA as a homodimer. Part of a ternary complex containing AR, EFCAB6/DJBP and PARK7. Interacts with HIPK3 and NR0B2 in the presence of androgen. The ligand binding domain interacts with KAT7/HBO1 in the presence of dihydrotestosterone. Interacts with EFCAB6/DJBP, PQBP1, RANBP9, RBAK, SPDEF, SRA1, TGFB1I1, ZNF318 and RREB1. Interacts with ZMIZ1/ZIMP10 and ZMIZ2/ZMIP7 which both enhance its transactivation activity. Interacts with SLC30A9 and RAD54L2/ARIP4. Interacts with MACROD1 (via macro domain). Interacts via the ligand-binding domain with LXXLL and FXXLF motifs from NCOA1, NCOA2, NCOA3 and MAGEA11. Interacts (via nuclear receptor DNA binding domain and nuclear receptor ligand binding domain) with NCOA4. The AR N-terminal poly-Gln region binds Ran resulting in enhancement of AR-mediated transactivation. Ran-binding decreases as the poly-Gln length increases. Interacts with HIP1 (via coiled coil domain). Interacts (via ligand-binding domain) with TRIM68. Interacts with TNK2. Interacts with USP26. Interacts with RNF6. Interacts (regulated by RNF6 probably through polyubiquitination) with RNF14; regulates AR transcriptional activity. Interacts with PRMT2 and TRIM24. Interacts with RACK1. Interacts with RANBP10; this interaction enhances dihydrotestosterone-induced AR transcriptional activity. Interacts with PRPF6 in a hormone-independent way; this interaction enhances dihydrotestosterone-induced AR transcriptional activity. Interacts with STK4/MST1. Interacts with ZIPK/DAPK3. Interacts with LPXN. Interacts with MAK. Part of a complex containing AR, MAK and NCOA3. Interacts with CRY1. Interacts with CCAR1 and GATA2. Interacts with BUD31. Interacts with ARID4A. Interacts with ARID4B. Interacts (via NR LBD domain) with ZBTB7A; the interaction is direct and androgen-dependent. Interacts with NCOR1. Interacts with NCOR2. Interacts with CRY2 in a ligand-dependent manner. Phosphorylated in prostate cancer cells in response to several growth factors including EGF. Phosphorylation is induced by c-Src kinase (CSK). Tyr-517 is one of the major phosphorylation sites and an increase in phosphorylation and Src kinase activity is associated with prostate cancer progression. Phosphorylation by TNK2 enhances the DNA-binding and transcriptional activity. Phosphorylation at Ser-61 by CDK9 regulates AR promoter selectivity and cell growth. Phosphorylation by PAK6 leads to AR-mediated transcription inhibition. Post-translationally, sumoylated on Lys-384 (major) and Lys-503. Ubiquitinated. Deubiquitinated by USP26. 'Lys-6' and 'Lys-27'-linked polyubiquitination by RNF6 modulates AR transcriptional activity and specificity. In terms of processing, palmitoylated by ZDHHC7 and ZDHHC21. Palmitoylation is required for plasma membrane targeting and for rapid intracellular signaling via ERK and AKT kinases and cAMP generation. Highest levels in the seminal vesicle, ventral prostate and coagulating gland with lower levels in the kidney and levator ani muscle.

It localises to the nucleus. Its subcellular location is the cytoplasm. Functionally, steroid hormone receptors are ligand-activated transcription factors that regulate eukaryotic gene expression and affect cellular proliferation and differentiation in target tissues. Transcription factor activity is modulated by bound coactivator and corepressor proteins like ZBTB7A that recruits NCOR1 and NCOR2 to the androgen response elements/ARE on target genes, negatively regulating androgen receptor signaling and androgen-induced cell proliferation. Transcription activation is also down-regulated by NR0B2. Activated, but not phosphorylated, by HIPK3 and ZIPK/DAPK3. This Rattus norvegicus (Rat) protein is Androgen receptor (Ar).